We begin with the raw amino-acid sequence, 433 residues long: Methylenetetrahydrofolate--tRNA-(uracil-5-)-methyltransferase TrmFO (433 aa).

8-13 (GAGLAG) lines the FAD pocket.

The protein belongs to the MnmG family. TrmFO subfamily. FAD is required as a cofactor.

It localises to the cytoplasm. It carries out the reaction uridine(54) in tRNA + (6R)-5,10-methylene-5,6,7,8-tetrahydrofolate + NADH + H(+) = 5-methyluridine(54) in tRNA + (6S)-5,6,7,8-tetrahydrofolate + NAD(+). It catalyses the reaction uridine(54) in tRNA + (6R)-5,10-methylene-5,6,7,8-tetrahydrofolate + NADPH + H(+) = 5-methyluridine(54) in tRNA + (6S)-5,6,7,8-tetrahydrofolate + NADP(+). Catalyzes the folate-dependent formation of 5-methyl-uridine at position 54 (M-5-U54) in all tRNAs. In Carboxydothermus hydrogenoformans (strain ATCC BAA-161 / DSM 6008 / Z-2901), this protein is Methylenetetrahydrofolate--tRNA-(uracil-5-)-methyltransferase TrmFO.